Here is a 295-residue protein sequence, read N- to C-terminus: Small ribosomal subunit protein uS2 (295 aa).

Ser-2 is modified (N-acetylserine). Ser-43 is modified (phosphoserine). Lys-52 carries the post-translational modification N6-acetyllysine. Residues 54–113 (TWEKLLLAARAIVAIENPADVSVISSRNTGQRAVLKFAAATGATPIAGRFTPGTFTNQIQ) are interaction with PPP1R16B. Position 89 is an N6-acetyllysine; alternate (Lys-89). A Glycyl lysine isopeptide (Lys-Gly) (interchain with G-Cter in SUMO2); alternate cross-link involves residue Lys-89. Position 97 is a phosphothreonine (Thr-97). Laminin-binding regions lie at residues 161 to 180 (IPCN…MLAR) and 205 to 229 (RDPE…EFQG). [DE]-W-[ST] repeat units lie at residues 230 to 232 (EWT), 247 to 249 (DWS), 266 to 268 (DWS), 275 to 277 (DWS), and 293 to 295 (EWS). Residues 242-295 (QPEVADWSEGVQVPSVPIQQFPTEDWSAQPATEDWSAAPTAQATEWVGATTEWS) form a laminin-binding region. The interval 266–295 (DWSAQPATEDWSAAPTAQATEWVGATTEWS) is disordered.

It belongs to the universal ribosomal protein uS2 family. In terms of assembly, monomer (37LRP) and homodimer (67LR). Component of the small ribosomal subunit. Mature ribosomes consist of a small (40S) and a large (60S) subunit. The 40S subunit contains about 33 different proteins and 1 molecule of RNA (18S). The 60S subunit contains about 49 different proteins and 3 molecules of RNA (28S, 5.8S and 5S). Interacts with RPS21. Interacts with several laminins including at least LAMB1. Interacts with MDK. The mature dimeric form interacts with PPP1R16B (via its fourth ankyrin repeat). Interacts with PPP1CA only in the presence of PPP1R16B. Post-translationally, acylated. Acylation may be a prerequisite for conversion of the monomeric 37 kDa laminin receptor precursor (37LRP) to the mature dimeric 67 kDa laminin receptor (67LR), and may provide a mechanism for membrane association. In terms of processing, cleaved by stromelysin-3 (ST3) at the cell surface. Cleavage by stromelysin-3 may be a mechanism to alter cell-extracellular matrix interactions. In terms of tissue distribution, expressed in most neurons and in a subset of glial cells. The overall distribution of LR correlates with that reported for laminin-1 but also with brain regions classically associated with prion-related neurodegeneration.

The protein resides in the cell membrane. It localises to the cytoplasm. The protein localises to the nucleus. Functionally, required for the assembly and/or stability of the 40S ribosomal subunit. Required for the processing of the 20S rRNA-precursor to mature 18S rRNA in a late step of the maturation of 40S ribosomal subunits. Also functions as a cell surface receptor for laminin. Plays a role in cell adhesion to the basement membrane and in the consequent activation of signaling transduction pathways. May play a role in cell fate determination and tissue morphogenesis. Also acts as a receptor for several other ligands, including the pathogenic prion protein, viruses, and bacteria. Acts as a PPP1R16B-dependent substrate of PPP1CA. In Rattus norvegicus (Rat), this protein is Small ribosomal subunit protein uS2 (Rpsa).